Reading from the N-terminus, the 785-residue chain is E3 UFM1-protein ligase 1 homolog (785 aa).

The disordered stretch occupies residues 405–483 (ASFQDQDDDG…GGGGGNKKTV (79 aa)).

This sequence belongs to the UFL1 family.

Functionally, E3 UFM1-protein ligase that mediates ufmylation of target proteins. In Drosophila pseudoobscura pseudoobscura (Fruit fly), this protein is E3 UFM1-protein ligase 1 homolog.